We begin with the raw amino-acid sequence, 266 residues long: Protein PAE0875 (266 aa).

The protein belongs to the CinA family.

The protein is Protein PAE0875 of Pyrobaculum aerophilum (strain ATCC 51768 / DSM 7523 / JCM 9630 / CIP 104966 / NBRC 100827 / IM2).